A 519-amino-acid chain; its full sequence is Bifunctional purine biosynthesis protein PurH (519 aa).

One can recognise an MGS-like domain in the interval 1-145 (MQPIQRALIS…KNHASVTVVV (145 aa)).

It belongs to the PurH family.

It catalyses the reaction (6R)-10-formyltetrahydrofolate + 5-amino-1-(5-phospho-beta-D-ribosyl)imidazole-4-carboxamide = 5-formamido-1-(5-phospho-D-ribosyl)imidazole-4-carboxamide + (6S)-5,6,7,8-tetrahydrofolate. It carries out the reaction IMP + H2O = 5-formamido-1-(5-phospho-D-ribosyl)imidazole-4-carboxamide. It participates in purine metabolism; IMP biosynthesis via de novo pathway; 5-formamido-1-(5-phospho-D-ribosyl)imidazole-4-carboxamide from 5-amino-1-(5-phospho-D-ribosyl)imidazole-4-carboxamide (10-formyl THF route): step 1/1. Its pathway is purine metabolism; IMP biosynthesis via de novo pathway; IMP from 5-formamido-1-(5-phospho-D-ribosyl)imidazole-4-carboxamide: step 1/1. This is Bifunctional purine biosynthesis protein PurH from Allochromatium vinosum (strain ATCC 17899 / DSM 180 / NBRC 103801 / NCIMB 10441 / D) (Chromatium vinosum).